A 403-amino-acid chain; its full sequence is Tyrosine--tRNA ligase (403 aa).

The short motif at 42 to 51 is the 'HIGH' region element; sequence PTAPDLHLGH. Residues 226–230 carry the 'KMSKS' region motif; that stretch reads KMSKS. ATP is bound at residue Lys-229. One can recognise an S4 RNA-binding domain in the interval 339 to 400; the sequence is LRLAGLLTAA…GKRNFARVLL (62 aa).

Belongs to the class-I aminoacyl-tRNA synthetase family. TyrS type 2 subfamily. Homodimer.

Its subcellular location is the cytoplasm. It catalyses the reaction tRNA(Tyr) + L-tyrosine + ATP = L-tyrosyl-tRNA(Tyr) + AMP + diphosphate + H(+). Catalyzes the attachment of tyrosine to tRNA(Tyr) in a two-step reaction: tyrosine is first activated by ATP to form Tyr-AMP and then transferred to the acceptor end of tRNA(Tyr). In Xanthomonas euvesicatoria pv. vesicatoria (strain 85-10) (Xanthomonas campestris pv. vesicatoria), this protein is Tyrosine--tRNA ligase.